Here is a 272-residue protein sequence, read N- to C-terminus: NH(3)-dependent NAD(+) synthetase (272 aa).

45 to 52 is a binding site for ATP; the sequence is GISGGQDS. Aspartate 51 serves as a coordination point for Mg(2+). Position 138 (arginine 138) interacts with deamido-NAD(+). Threonine 158 contacts ATP. Mg(2+) is bound at residue glutamate 163. Positions 171 and 178 each coordinate deamido-NAD(+). ATP-binding residues include lysine 187 and threonine 209. 258-259 provides a ligand contact to deamido-NAD(+); sequence HK.

This sequence belongs to the NAD synthetase family. As to quaternary structure, homodimer.

It carries out the reaction deamido-NAD(+) + NH4(+) + ATP = AMP + diphosphate + NAD(+) + H(+). It participates in cofactor biosynthesis; NAD(+) biosynthesis; NAD(+) from deamido-NAD(+) (ammonia route): step 1/1. Its function is as follows. Catalyzes the ATP-dependent amidation of deamido-NAD to form NAD. Uses ammonia as a nitrogen source. The chain is NH(3)-dependent NAD(+) synthetase from Bacillus cereus (strain ATCC 10987 / NRS 248).